The sequence spans 121 residues: Small ribosomal subunit protein uS13 (121 aa).

The disordered stretch occupies residues 91-121; it reads HRRGLPVRGQKTKNNARTRKGPVKTVANKKK.

The protein belongs to the universal ribosomal protein uS13 family. Part of the 30S ribosomal subunit. Forms a loose heterodimer with protein S19. Forms two bridges to the 50S subunit in the 70S ribosome.

Its function is as follows. Located at the top of the head of the 30S subunit, it contacts several helices of the 16S rRNA. In the 70S ribosome it contacts the 23S rRNA (bridge B1a) and protein L5 of the 50S subunit (bridge B1b), connecting the 2 subunits; these bridges are implicated in subunit movement. Contacts the tRNAs in the A and P-sites. The polypeptide is Small ribosomal subunit protein uS13 (Staphylococcus saprophyticus subsp. saprophyticus (strain ATCC 15305 / DSM 20229 / NCIMB 8711 / NCTC 7292 / S-41)).